A 233-amino-acid chain; its full sequence is Small ribosomal subunit protein uS7m (233 aa).

Residues 1-28 constitute a mitochondrion transit peptide; the sequence is MAAPTAAGLCPRLRAWLPRLTQVRWSRY.

It belongs to the universal ribosomal protein uS7 family. As to quaternary structure, component of the mitochondrial ribosome small subunit (28S) which comprises a 12S rRNA and about 30 distinct proteins.

The protein localises to the mitochondrion. The chain is Small ribosomal subunit protein uS7m (MRPS7) from Gallus gallus (Chicken).